Here is a 907-residue protein sequence, read N- to C-terminus: Probable dipeptidyl-aminopeptidase B (907 aa).

The segment covering 1-11 (MYDQVPYRDTD) has biased composition (basic and acidic residues). The tract at residues 1-71 (MYDQVPYRDT…RGKPDEDDDL (71 aa)) is disordered. The Cytoplasmic segment spans residues 1–88 (MYDQVPYRDT…LKPMERKVRR (88 aa)). The segment covering 22 to 36 (SDSNRSSIDTTSTTS) has biased composition (low complexity). Residues 89–109 (AMYLLAFLMIGGWFLALAVYV) form a helical; Signal-anchor for type II membrane protein membrane-spanning segment. The Vacuolar portion of the chain corresponds to 110–907 (SREHFGTPDT…PLRKRNRELV (798 aa)). N-linked (GlcNAc...) asparagine glycans are attached at residues Asn185 and Asn341. The Charge relay system role is filled by Ser746. Asn800 carries an N-linked (GlcNAc...) asparagine glycan. Active-site charge relay system residues include Asp823 and His856.

It belongs to the peptidase S9B family.

The protein localises to the vacuole membrane. It carries out the reaction Release of an N-terminal dipeptide, Xaa-Yaa-|-Zaa-, from a polypeptide, preferentially when Yaa is Pro, provided Zaa is neither Pro nor hydroxyproline.. Type IV dipeptidyl-peptidase which removes N-terminal dipeptides sequentially from polypeptides having unsubstituted N-termini provided that the penultimate residue is proline. This is Probable dipeptidyl-aminopeptidase B (DAPB) from Tuber melanosporum (strain Mel28) (Perigord black truffle).